The chain runs to 422 residues: 5'-deoxyadenosine deaminase (422 aa).

Residues histidine 57 and histidine 59 each coordinate Zn(2+). Substrate is bound by residues glutamate 86 and histidine 178. Histidine 205 lines the Zn(2+) pocket. Substrate contacts are provided by glutamate 208 and aspartate 294. A Zn(2+)-binding site is contributed by aspartate 294.

The protein belongs to the metallo-dependent hydrolases superfamily. MTA/SAH deaminase family. As to quaternary structure, homotetramer. Zn(2+) serves as cofactor.

It catalyses the reaction 5'-deoxyadenosine + H2O + H(+) = 5'-deoxyinosine + NH4(+). It carries out the reaction S-adenosyl-L-homocysteine + H2O + H(+) = S-inosyl-L-homocysteine + NH4(+). The catalysed reaction is S-methyl-5'-thioadenosine + H2O + H(+) = S-methyl-5'-thioinosine + NH4(+). The enzyme catalyses adenosine + H2O + H(+) = inosine + NH4(+). It participates in amino-acid biosynthesis; S-adenosyl-L-methionine biosynthesis. Catalyzes the deamination of three SAM-derived enzymatic products, namely 5'-deoxyadenosine, S-adenosyl-L-homocysteine, and 5'-methylthioadenosine, to produce the inosine analogs. Can also deaminate adenosine. The preferred substrate for this enzyme is 5'-deoxyadenosine, but all these substrates are efficiently deaminated. Likely functions in a S-adenosyl-L-methionine (SAM) recycling pathway from S-adenosyl-L-homocysteine (SAH) produced from SAM-dependent methylation reactions. May also be involved in the recycling of 5'-deoxyadenosine, whereupon the 5'-deoxyribose moiety of 5'-deoxyinosine is further metabolized to deoxyhexoses used for the biosynthesis of aromatic amino acids in methanogens. The sequence is that of 5'-deoxyadenosine deaminase from Methanococcus maripaludis (strain C5 / ATCC BAA-1333).